A 393-amino-acid polypeptide reads, in one-letter code: Cysteine protease ATG4B (393 aa).

Met1 bears the N-acetylmethionine mark. Residue Ser34 is modified to Phosphoserine. The Nucleophile role is filled by Cys74. At Cys189 the chain carries S-nitrosocysteine. Catalysis depends on residues Asp278 and His280. Cys292 and Cys301 each carry S-nitrosocysteine. A disulfide bond links Cys292 and Cys361. Ser316 and Ser383 each carry phosphoserine. An LIR motif is present at residues 388–391 (FEIL). Ser392 carries the post-translational modification Phosphoserine.

This sequence belongs to the peptidase C54 family. In terms of assembly, interacts with PFKP; promoting phosphorylation of ATG4B at Ser-34. Interacts with GBP7. Phosphorylation at Ser-383 and Ser-392 promotes autophagy by increasing protein delipidation activity without affecting proteolytic activation of ATG8 proteins. Phosphorylation at Ser-316 by ULK1 inhibits autophagy by decreasing both proteolytic activation and delipidation activities. Phosphorylation at Ser-316 is dephosphorylated by protein phosphatase 2A (PP2A). Phosphorylation at Ser-34 by AKT2 promotes its hydrolase activity, leading to increased proteolytic activation and delipidation of ATG8 family proteins. Phosphorylation at Ser-34 by AKT1 promotes mitochondrial localization and inhibition of the F1F0-ATP synthase activity, leading to elevation of mitochondrial reactive oxygen species (ROS). In terms of processing, ubiquitinated by RNF5, leading to its degradation by the proteasome. Post-translationally, S-nitrosylation in response to high glucose decreases both proteolytic activation and delipidation activities. O-glycosylated by OGT, leading to increase protease activity, thereby promoting the proteolytic activation of ATG8 family proteins. In terms of processing, forms reversible intrachain disulfide bonds in response to oxidative stress. Forms interchain disulfide bonds, leading to formation of homooligomers in response to oxidation.

It is found in the cytoplasm. The protein localises to the cytosol. The protein resides in the cytoplasmic vesicle. Its subcellular location is the autophagosome. It localises to the endoplasmic reticulum. It is found in the mitochondrion. The catalysed reaction is [protein]-C-terminal L-amino acid-glycyl-phosphatidylethanolamide + H2O = [protein]-C-terminal L-amino acid-glycine + a 1,2-diacyl-sn-glycero-3-phosphoethanolamine. It catalyses the reaction [protein]-C-terminal L-amino acid-glycyl-phosphatidylserine + H2O = [protein]-C-terminal L-amino acid-glycine + a 1,2-diacyl-sn-glycero-3-phospho-L-serine. Inhibited by N-ethylmaleimide. Redox-regulated during autophagy since reducing conditions activate ATG4A whereas an oxidizing environment such as the presence of H(2)O(2) inhibits its activity. The cysteine protease activity compounds is inhibited by styrylquinoline compounds 4-28 and LV-320. In terms of biological role, cysteine protease that plays a key role in autophagy by mediating both proteolytic activation and delipidation of ATG8 family proteins. Required for canonical autophagy (macroautophagy), non-canonical autophagy as well as for mitophagy. The protease activity is required for proteolytic activation of ATG8 family proteins: cleaves the C-terminal amino acid of ATG8 proteins MAP1LC3A, MAP1LC3B, MAP1LC3C, GABARAPL1, GABARAPL2 and GABARAP, to reveal a C-terminal glycine. Exposure of the glycine at the C-terminus is essential for ATG8 proteins conjugation to phosphatidylethanolamine (PE) and insertion to membranes, which is necessary for autophagy. Protease activity is also required to counteract formation of high-molecular weight conjugates of ATG8 proteins (ATG8ylation): acts as a deubiquitinating-like enzyme that removes ATG8 conjugated to other proteins, such as ATG3. In addition to the protease activity, also mediates delipidation of ATG8 family proteins. Catalyzes delipidation of PE-conjugated forms of ATG8 proteins during macroautophagy. Also involved in non-canonical autophagy, a parallel pathway involving conjugation of ATG8 proteins to single membranes at endolysosomal compartments, by catalyzing delipidation of ATG8 proteins conjugated to phosphatidylserine (PS). Compared to other members of the family (ATG4A, ATG4C or ATG4C), constitutes the major protein for proteolytic activation of ATG8 proteins, while it displays weaker delipidation activity than other ATG4 paralogs. Involved in phagophore growth during mitophagy independently of its protease activity and of ATG8 proteins: acts by regulating ATG9A trafficking to mitochondria and promoting phagophore-endoplasmic reticulum contacts during the lipid transfer phase of mitophagy. In Rattus norvegicus (Rat), this protein is Cysteine protease ATG4B.